A 470-amino-acid chain; its full sequence is Nuclear receptor ROR-beta (470 aa).

The segment at residues 18–93 (VIPCKICGDK…LGMSRDAVKF (76 aa)) is a DNA-binding region (nuclear receptor). 2 NR C4-type zinc fingers span residues 21–41 (CKIC…CEGC) and 57–81 (CPRQ…LQKC). The span at 104–117 (LYAEVQKHQQRLQE) shows a compositional bias: basic and acidic residues. The segment at 104 to 127 (LYAEVQKHQQRLQEQRQQQSGEAE) is disordered. Residues 222 to 460 (EIDRIAQNII…TLFPPLYKEL (239 aa)) enclose the NR LBD domain. Residues 456 to 461 (LYKELF) carry the AF-2 motif.

Belongs to the nuclear hormone receptor family. NR1 subfamily. As to quaternary structure, monomer. Interacts with CRX. As to expression, isoform 2 expressed with circadian rhythm in eye and pineal gland. Isoform 1 expressed in retina cortex, thalamus, and hypothalamus.

The protein localises to the nucleus. It localises to the nucleoplasm. Nuclear receptor that binds DNA as a monomer to ROR response elements (RORE) containing a single core motif half-site 5'-AGGTCA-3' preceded by a short A-T-rich sequence. Considered to have intrinsic transcriptional activity, have some natural ligands such as all-trans retinoic acid (ATRA) and other retinoids which act as inverse agonists repressing the transcriptional activity. Required for normal postnatal development of rod and cone photoreceptor cells. Modulates rod photoreceptors differentiation at least by inducing the transcription factor NRL-mediated pathway. In cone photoreceptor cells, regulates transcription of OPN1SW. Involved in the regulation of the period length and stability of the circadian rhythm. May control cytoarchitectural patterning of neocortical neurons during development. May act in a dose-dependent manner to regulate barrel formation upon innervation of layer IV neurons by thalamocortical axons. May play a role in the suppression of osteoblastic differentiation through the inhibition of RUNX2 transcriptional activity. Its function is as follows. Critical for hindlimb motor control and for the differentiation of amacrine and horizontal cells in the retina. Regulates the expression of PTF1A synergistically with FOXN4. This Rattus norvegicus (Rat) protein is Nuclear receptor ROR-beta (Rorb).